We begin with the raw amino-acid sequence, 448 residues long: Probable glycine dehydrogenase (decarboxylating) subunit 1 (448 aa).

The protein belongs to the GcvP family. N-terminal subunit subfamily. In terms of assembly, the glycine cleavage system is composed of four proteins: P, T, L and H. In this organism, the P 'protein' is a heterodimer of two subunits.

It carries out the reaction N(6)-[(R)-lipoyl]-L-lysyl-[glycine-cleavage complex H protein] + glycine + H(+) = N(6)-[(R)-S(8)-aminomethyldihydrolipoyl]-L-lysyl-[glycine-cleavage complex H protein] + CO2. The glycine cleavage system catalyzes the degradation of glycine. The P protein binds the alpha-amino group of glycine through its pyridoxal phosphate cofactor; CO(2) is released and the remaining methylamine moiety is then transferred to the lipoamide cofactor of the H protein. This Bacillus licheniformis (strain ATCC 14580 / DSM 13 / JCM 2505 / CCUG 7422 / NBRC 12200 / NCIMB 9375 / NCTC 10341 / NRRL NRS-1264 / Gibson 46) protein is Probable glycine dehydrogenase (decarboxylating) subunit 1.